The chain runs to 324 residues: MSFAANAKKELTQLELVSCCARAELSALIRMNGSLSLGNKQVGLDVTTENAAIARRIYTLIKHLYPNIHIELLVQKKMRLKKNNVYMVRISKEARQLLEDLRILNGSFQFIRDISPEIVKESCCKRAYLRGAFLAGGSINHPETSSYHLEIFSLYEEHNQAICELMNGFSLSAKTLERKKGFITYLKESEKITEFLNIIGAHQALLYFEDVRIMKDMRNSVNRLVNCETANLNKTVGAALRQVENIRFIDKTIGLENLPPKLQEVAKLRVKHQDVTLKELGEMMQGGKVSKSGINHRLRKIDEFADKLRNGTFDAKKLNTHRGK.

The H-T-H motif DNA-binding region spans 276-310; that stretch reads TLKELGEMMQGGKVSKSGINHRLRKIDEFADKLRN.

This sequence belongs to the WhiA family.

Its function is as follows. Involved in cell division and chromosome segregation. This Shouchella clausii (strain KSM-K16) (Alkalihalobacillus clausii) protein is Probable cell division protein WhiA.